We begin with the raw amino-acid sequence, 466 residues long: Methylenetetrahydrofolate--tRNA-(uracil-5-)-methyltransferase TrmFO (466 aa).

14–19 (GGGLAG) provides a ligand contact to FAD.

The protein belongs to the MnmG family. TrmFO subfamily. Requires FAD as cofactor.

Its subcellular location is the cytoplasm. The enzyme catalyses uridine(54) in tRNA + (6R)-5,10-methylene-5,6,7,8-tetrahydrofolate + NADH + H(+) = 5-methyluridine(54) in tRNA + (6S)-5,6,7,8-tetrahydrofolate + NAD(+). It carries out the reaction uridine(54) in tRNA + (6R)-5,10-methylene-5,6,7,8-tetrahydrofolate + NADPH + H(+) = 5-methyluridine(54) in tRNA + (6S)-5,6,7,8-tetrahydrofolate + NADP(+). Catalyzes the folate-dependent formation of 5-methyl-uridine at position 54 (M-5-U54) in all tRNAs. In Brucella canis (strain ATCC 23365 / NCTC 10854 / RM-666), this protein is Methylenetetrahydrofolate--tRNA-(uracil-5-)-methyltransferase TrmFO.